The primary structure comprises 365 residues: Beta-parvin (365 aa).

Over residues 1 to 12 the composition is skewed to pro residues; the sequence is MSSAPPRSPTPR. Residues 1–52 are disordered; that stretch reads MSSAPPRSPTPRAPKMKKDESFLGKLGGTLARKKKTREVTDLQEEGKSAINS. A Phosphoserine modification is found at serine 8. Basic and acidic residues predominate over residues 37–47; it reads REVTDLQEEGK. Calponin-homology (CH) domains are found at residues 88-195 and 255-362; these read KELV…MHFR and NLVK…TKYK.

This sequence belongs to the parvin family. Interacts with ILK, ARHGEF6, PXN (via LD motifs), ACTN2 and actin. Interacts with DYSF. In terms of processing, phosphorylated by ILK. In terms of tissue distribution, expressed predominantly in heart and moderately in spleen, lung and skeletal muscle.

It is found in the cell junction. The protein resides in the focal adhesion. It localises to the cell membrane. The protein localises to the cytoplasm. Its subcellular location is the cytoskeleton. It is found in the cell projection. The protein resides in the lamellipodium. It localises to the myofibril. The protein localises to the sarcomere. Its subcellular location is the z line. In terms of biological role, adapter protein that plays a role in integrin signaling via ILK and in activation of the GTPases CDC42 and RAC1 by guanine exchange factors, such as ARHGEF6. Is involved in the reorganization of the actin cytoskeleton and formation of lamellipodia. Plays a role in cell adhesion, cell spreading, establishment or maintenance of cell polarity, and cell migration. This is Beta-parvin (Parvb) from Mus musculus (Mouse).